The sequence spans 112 residues: Nucleoid-associated protein CA_C0126 (112 aa).

Over residues 93–102 (EEETSGEMKK) the composition is skewed to basic and acidic residues. Positions 93–112 (EEETSGEMKKLTGGLNIPGL) are disordered.

It belongs to the YbaB/EbfC family. In terms of assembly, homodimer.

It localises to the cytoplasm. It is found in the nucleoid. In terms of biological role, binds to DNA and alters its conformation. May be involved in regulation of gene expression, nucleoid organization and DNA protection. This Clostridium acetobutylicum (strain ATCC 824 / DSM 792 / JCM 1419 / IAM 19013 / LMG 5710 / NBRC 13948 / NRRL B-527 / VKM B-1787 / 2291 / W) protein is Nucleoid-associated protein CA_C0126.